A 572-amino-acid chain; its full sequence is MAKPFFRLQKFLRRTQFLLLFLTAAYLMTGSLLLLQRARVALPQALRAPGSLQALPVATVALGVGLLDGRSLRDPHSSPDLLLDVDTLRSPLARLPPGIRWPRRNRSSLRRRWLHHLTSDPQGPPTLSPEASGPANHNRGNYLGCFSEEGQERTLKGAVFYDLRKMTVSHCQDACAERSYVYAGLEAGAECYCGNRLPATRVSLKECNQECKGEKGSMCGAVRRLSVYSVGLQQPGSKKRRTATYRGCFPLPENVTHTFSSSMTQANMTVETCSGFCSQKEFPLAILRGWDCYCAYPTPQFSLRDAVDGALCSQAPETQGLPGYCEVYQTPVQDTRCTDRKFLPDKSKVFVALSSFPGAGNTWARHLIEHATGFYTGSYYFDGTLYNKGFKGEKDHWRSRRTICVKTHESGRREIEMFDSAILLIRNPYRSLVAEFNRKCAGHLGYAPDRNWKSKEWPEFVNSYASWWSSHVLDWLKYGKRLLVVHYEELRHSLVPTLREMVAFLNVSVSEERLLCVENNKEGSFRRRGRRPHDQEPFTPEMKDLINGYIRTVDQALRDHNWAGLPREYVPR.

Residues 1–14 lie on the Cytoplasmic side of the membrane; that stretch reads MAKPFFRLQKFLRR. The chain crosses the membrane as a helical; Signal-anchor for type II membrane protein span at residues 15-35; it reads TQFLLLFLTAAYLMTGSLLLL. Residues 36-572 are Extracellular-facing; the sequence is QRARVALPQA…AGLPREYVPR (537 aa). The N-linked (GlcNAc...) asparagine glycan is linked to asparagine 105. 2 consecutive WSC domains span residues 139-231 and 242-337; these read RGNY…YSVG and TATY…DTRC. A glycan (N-linked (GlcNAc...) asparagine) is linked at asparagine 254.

Belongs to the WSCD family.

It localises to the golgi apparatus membrane. The enzyme catalyses a ganglioside GM1b + 3'-phosphoadenylyl sulfate = an 8-O-sulfo-ganglioside GM1b + adenosine 3',5'-bisphosphate + H(+). Its function is as follows. Sialate:O-sulfotransferase which catalyzes 8-O-sulfation at the Sia-glycan level using 3'-phosphoadenosine 5'-phosphosulfate (PAPS) as a donor, forming 8-O-sulfated Sia (Sia8S)-glycans. Displays selectivity toward glycolipids such as GM1 gangliosides. The protein is Sialate:O-sulfotransferase 1 (Wscd1) of Mus musculus (Mouse).